Consider the following 164-residue polypeptide: FMN reductase (NADH) RutF (164 aa).

This sequence belongs to the non-flavoprotein flavin reductase family. RutF subfamily.

It carries out the reaction FMNH2 + NAD(+) = FMN + NADH + 2 H(+). In terms of biological role, catalyzes the reduction of FMN to FMNH2 which is used to reduce pyrimidine by RutA via the Rut pathway. The polypeptide is FMN reductase (NADH) RutF (Escherichia coli O45:K1 (strain S88 / ExPEC)).